Here is a 202-residue protein sequence, read N- to C-terminus: FMN-dependent NADH:quinone oxidoreductase 2 (202 aa).

FMN contacts are provided by residues serine 9, 15 to 17, 93 to 96, and 137 to 140; these read SVS, MYNF, and SRGG.

It belongs to the azoreductase type 1 family. Homodimer. FMN is required as a cofactor.

The catalysed reaction is 2 a quinone + NADH + H(+) = 2 a 1,4-benzosemiquinone + NAD(+). It catalyses the reaction N,N-dimethyl-1,4-phenylenediamine + anthranilate + 2 NAD(+) = 2-(4-dimethylaminophenyl)diazenylbenzoate + 2 NADH + 2 H(+). Functionally, quinone reductase that provides resistance to thiol-specific stress caused by electrophilic quinones. Its function is as follows. Also exhibits azoreductase activity. Catalyzes the reductive cleavage of the azo bond in aromatic azo compounds to the corresponding amines. This chain is FMN-dependent NADH:quinone oxidoreductase 2, found in Bradyrhizobium diazoefficiens (strain JCM 10833 / BCRC 13528 / IAM 13628 / NBRC 14792 / USDA 110).